The following is a 697-amino-acid chain: MARQVPLERCRNIGIMAHIDAGKTTTTERVLFYTGRTHRIGEVHEGTATMDWMAQEQERGITITSAATTCTWRDERINIIDTPGHVDFTAEVERSLRVLDGAVAVFDAVHGVEPQSETVWRQADKYSVPRICFINKIDKMGADFEHAIDTIRKRLNAKPVAIQYPIGLEDKFKGVIDLFKMKALVWHDEAMGSQYDVEEIPAELLKKAQAFHNLMVETIAECDDELMAKYIEGEEMTAAELQAGLRRATIAMKVFPVTVGTAFKNKGVQTLLDAVVDYLPSPLDIPPVTGKNPDTGLEEQRSADDKQPFAALAFKIMTDPFVGQLTFIRVYSGQLKTGDSVYNSSKGRTERIGRLLKMHANKREEIGEIMAGDICAVVGLKTITTGDTISDEKHPLVLESIEFPTPVISVAVEPKTKSDQEKMGVALNKLAQEDPTFRVSTDPDSGQTIIAGMGELHLEILVDRMMREFHVQANVGKPQVAYRETIRKEAQAEGKYIRQTGGSGQYGHCKIRVGPNEPGKGYEFINDIVGGTIPKEFIKPIDQGIKEALEGGVLAGYEMVDVKVTLYDGSYHDVDSNEMAFKIAGSMAFKEAARKASPVLLEPVMSVEVVVPEEYMGVIIGDLNSRRGRIEGLEHRAGSQVVKAMVPLAEMFGYVNSMRSNTQGRATFSMHFAHYEEAPRSVAEEIVAKVQGKPAAR.

In terms of domain architecture, tr-type G spans 8 to 283 (ERCRNIGIMA…AVVDYLPSPL (276 aa)). GTP is bound by residues 17 to 24 (AHIDAGKT), 81 to 85 (DTPGH), and 135 to 138 (NKID).

It belongs to the TRAFAC class translation factor GTPase superfamily. Classic translation factor GTPase family. EF-G/EF-2 subfamily.

The protein localises to the cytoplasm. Catalyzes the GTP-dependent ribosomal translocation step during translation elongation. During this step, the ribosome changes from the pre-translocational (PRE) to the post-translocational (POST) state as the newly formed A-site-bound peptidyl-tRNA and P-site-bound deacylated tRNA move to the P and E sites, respectively. Catalyzes the coordinated movement of the two tRNA molecules, the mRNA and conformational changes in the ribosome. The protein is Elongation factor G of Koribacter versatilis (strain Ellin345).